A 388-amino-acid polypeptide reads, in one-letter code: Dual-specificity RNA methyltransferase RlmN (388 aa).

The active-site Proton acceptor is the E109. A Radical SAM core domain is found at 115-354 (EDDRATLCVS…TIVRKTRGDD (240 aa)). C122 and C359 form a disulfide bridge. Residues C129, C133, and C136 each contribute to the [4Fe-4S] cluster site. S-adenosyl-L-methionine-binding positions include 183 to 184 (GE), S215, 237 to 239 (SLH), and N316. Residue C359 is the S-methylcysteine intermediate of the active site.

The protein belongs to the radical SAM superfamily. RlmN family. It depends on [4Fe-4S] cluster as a cofactor.

The protein localises to the cytoplasm. The enzyme catalyses adenosine(2503) in 23S rRNA + 2 reduced [2Fe-2S]-[ferredoxin] + 2 S-adenosyl-L-methionine = 2-methyladenosine(2503) in 23S rRNA + 5'-deoxyadenosine + L-methionine + 2 oxidized [2Fe-2S]-[ferredoxin] + S-adenosyl-L-homocysteine. The catalysed reaction is adenosine(37) in tRNA + 2 reduced [2Fe-2S]-[ferredoxin] + 2 S-adenosyl-L-methionine = 2-methyladenosine(37) in tRNA + 5'-deoxyadenosine + L-methionine + 2 oxidized [2Fe-2S]-[ferredoxin] + S-adenosyl-L-homocysteine. Specifically methylates position 2 of adenine 2503 in 23S rRNA and position 2 of adenine 37 in tRNAs. m2A2503 modification seems to play a crucial role in the proofreading step occurring at the peptidyl transferase center and thus would serve to optimize ribosomal fidelity. The chain is Dual-specificity RNA methyltransferase RlmN from Cronobacter sakazakii (strain ATCC BAA-894) (Enterobacter sakazakii).